The following is a 95-amino-acid chain: Aspartyl/glutamyl-tRNA(Asn/Gln) amidotransferase subunit C (95 aa).

It belongs to the GatC family. In terms of assembly, heterotrimer of A, B and C subunits.

It carries out the reaction L-glutamyl-tRNA(Gln) + L-glutamine + ATP + H2O = L-glutaminyl-tRNA(Gln) + L-glutamate + ADP + phosphate + H(+). The catalysed reaction is L-aspartyl-tRNA(Asn) + L-glutamine + ATP + H2O = L-asparaginyl-tRNA(Asn) + L-glutamate + ADP + phosphate + 2 H(+). Functionally, allows the formation of correctly charged Asn-tRNA(Asn) or Gln-tRNA(Gln) through the transamidation of misacylated Asp-tRNA(Asn) or Glu-tRNA(Gln) in organisms which lack either or both of asparaginyl-tRNA or glutaminyl-tRNA synthetases. The reaction takes place in the presence of glutamine and ATP through an activated phospho-Asp-tRNA(Asn) or phospho-Glu-tRNA(Gln). This is Aspartyl/glutamyl-tRNA(Asn/Gln) amidotransferase subunit C from Rhizobium leguminosarum bv. trifolii (strain WSM2304).